A 79-amino-acid polypeptide reads, in one-letter code: RNA-binding protein Hfq (79 aa).

One can recognise a Sm domain in the interval 10-69 (DPFLNALRKEHVPVSIYLVNGIKLQGNIESFDQYVVLLRNTVTQMVYKHAISTVVPARAV).

This sequence belongs to the Hfq family. In terms of assembly, homohexamer.

Its function is as follows. RNA chaperone that binds small regulatory RNA (sRNAs) and mRNAs to facilitate mRNA translational regulation in response to envelope stress, environmental stress and changes in metabolite concentrations. Also binds with high specificity to tRNAs. In Cupriavidus metallidurans (strain ATCC 43123 / DSM 2839 / NBRC 102507 / CH34) (Ralstonia metallidurans), this protein is RNA-binding protein Hfq.